A 336-amino-acid chain; its full sequence is UbiA prenyltransferase domain-containing protein 1 (336 aa).

An N-acetylalanine modification is found at Ala2. Helical transmembrane passes span 81–101 (LLLGCAVAVLAVHGAGNLVNT), 132–152 (FGVFLYTLGCVCAACLYYLSA), 158–178 (LALIYFGGLSGSFLYTGGIGF), 186–206 (LVILITFGPLAVMFAYAVQVG), 207–227 (SLAIFPLIYAIPLALSTEAIL), 243–265 (IVTLAILIGPTFSYVLYNTLLFV), 275–295 (THCSISLALPLLTIPMAFSLE), and 313–333 (LNLLLGLFYVFGIILAPAGSL).

This sequence belongs to the UbiA prenyltransferase family. Interacts with HMGCR and SOAT1.

The protein localises to the endoplasmic reticulum membrane. The protein resides in the golgi apparatus membrane. Its subcellular location is the mitochondrion membrane. It catalyses the reaction menadiol + (2E,6E,10E)-geranylgeranyl diphosphate = menaquinol-4 + diphosphate. The catalysed reaction is all-trans-decaprenyl diphosphate + 4-hydroxybenzoate = 4-hydroxy-3-(all-trans-decaprenyl)benzoate + diphosphate. It functions in the pathway quinol/quinone metabolism; menaquinone biosynthesis. Its pathway is cofactor biosynthesis; ubiquinone biosynthesis. Functionally, prenyltransferase that mediates the formation of menaquinone-4 (MK-4) and coenzyme Q10. MK-4 is a vitamin K2 isoform required for endothelial cell development. Mediates the conversion of phylloquinone (PK) into MK-4, probably by cleaving the side chain of phylloquinone (PK) to release 2-methyl-1,4-naphthoquinone (menadione; K3) and then prenylating it with geranylgeranyl pyrophosphate (GGPP) to form MK-4. Also plays a role in cardiovascular development independently of MK-4 biosynthesis, by acting as a coenzyme Q10 biosynthetic enzyme: coenzyme Q10, also named ubiquinone, plays an important antioxidant role in the cardiovascular system. Mediates biosynthesis of coenzyme Q10 in the Golgi membrane, leading to protect cardiovascular tissues from NOS3/eNOS-dependent oxidative stress. This is UbiA prenyltransferase domain-containing protein 1 (Ubiad1) from Mus musculus (Mouse).